Here is a 472-residue protein sequence, read N- to C-terminus: Coronin-6 (472 aa).

WD repeat units follow at residues 79–119 (GHTG…PVRN), 129–169 (GHSK…VLLS), 173–212 (IHPD…VVAE), 216–259 (AHEG…EPVA), and 264–304 (DTSN…PFVH). Residues 409 to 434 (NILDVRPPASPRRSQSASEAPLSQQH) form a disordered region. The segment covering 419–429 (PRRSQSASEAP) has biased composition (low complexity). A coiled-coil region spans residues 430–469 (LSQQHTLETLLEEMKALRERVQAQEERITALENMLCELVD).

The sequence is that of Coronin-6 (Coro6) from Rattus norvegicus (Rat).